The sequence spans 380 residues: Ankyrin repeat domain-containing protein 63 (380 aa).

ANK repeat units follow at residues 11–40 (AGTR…RSII), 46–79 (QGRT…AVNL), 83–112 (RGRT…DPEA), 116–145 (AGNS…RLGL), and 153–182 (AGLT…RAAA). 2 stretches are compositionally biased toward low complexity: residues 181–203 (AAAA…PAAS) and 216–226 (RPLLARFARAA). Residues 181-256 (AAAAAARGSN…GSERPELGRS (76 aa)) are disordered. Ser193 carries the post-translational modification Phosphoserine. At Ser294 the chain carries Phosphoserine. Residues 309–368 (PIGLSPHPEGGPGSGRLGLRRRSTAPDIPSLVGEAPGPESGPELEANALSVSVPGPNPWQ) form a disordered region.

This is Ankyrin repeat domain-containing protein 63 from Homo sapiens (Human).